Consider the following 124-residue polypeptide: Putative membrane protein insertion efficiency factor (124 aa).

The interval 1 to 24 (MHDPHGHAHTVRPPGRGRNWPGPW) is disordered. A compositionally biased stretch (low complexity) spans 12–24 (RPPGRGRNWPGPW).

Belongs to the UPF0161 family.

It is found in the cell inner membrane. Its function is as follows. Could be involved in insertion of integral membrane proteins into the membrane. In Mesorhizobium japonicum (strain LMG 29417 / CECT 9101 / MAFF 303099) (Mesorhizobium loti (strain MAFF 303099)), this protein is Putative membrane protein insertion efficiency factor.